A 387-amino-acid polypeptide reads, in one-letter code: O-methyltransferase lepI (387 aa).

A substrate-binding site is contributed by 135–148; it reads FENLWPVLMALPDF. Residues 175–195 form a substrate binding region; it reads CFHWLATQPTRIANFKVLLTD. Residues 227-228, Asp-252, 275-276, and Arg-291 each bind S-adenosyl-L-methionine; these read GG and NF.

The protein belongs to the class I-like SAM-binding methyltransferase superfamily. Cation-independent O-methyltransferase family.

Its function is as follows. O-methyltransferase; part of the gene cluster 23 that mediates the biosynthesis of a family of 2-pyridones known as leporins. The hybrid PKS-NRPS synthetase lepA and the enoyl reductase lepG are responsible for fusion of phenylalanine with a hexaketide and subsequent release of the stable tetramic acid precursor, pre-leporin C. Because lepA lacks a designated enoylreductase (ER) domain, the required activity is provided the enoyl reductase lepG. It is possible that the dehydrogenase lepF also participates in production of pre-leporin C. Cytochrome P450 monooxygenase lepH is then required for the ring expansion step to yield leporin C. Leporin C is then presumably further oxidized by the N-hydroxylase lepD to form leporin B. LepI may possess a function in biosynthesis upstream of lepA. Leporin B is further oxidized in the presence of ferric ion to give the leporin B trimer-iron chelate, but whether or not this reaction is catalyzed by an enzyme in the pathway or by ferric ion is not determined yet. This is O-methyltransferase lepI from Aspergillus flavus (strain ATCC 200026 / FGSC A1120 / IAM 13836 / NRRL 3357 / JCM 12722 / SRRC 167).